A 498-amino-acid chain; its full sequence is PE-PGRS family protein PE_PGRS33 (498 aa).

An essential for translocation to the cell surface region spans residues M1–A30. In terms of domain architecture, PE spans M1–A93. Residues G140–G260 are interacts with TLR2.

It belongs to the mycobacterial PE family. PGRS subfamily. In terms of assembly, interacts with human TLR2.

It localises to the secreted. Its subcellular location is the cell wall. The protein localises to the cell surface. The protein resides in the cell outer membrane. Its activity is regulated as follows. Binding of Ca(2+) to PE_PGRS33 induces conformational changes and increases affinity for TLR2. Functionally, induces TNF-alpha release through human Toll-like receptor 2 (TLR2) signaling pathway, leading to macrophage apoptosis. The signaling pathway involves TLR2-dependent activation of the mitogen-activated protein kinase kinase kinase 5 (ASK1), which activates the p38 and JNK MAPKs, leading to enhanced expression of TNF-alpha and tumor necrosis factor receptor superfamily member 1A (TNFRI) genes. Signals are amplified through classical caspase 8-dependent mitochondrial release of cytochrome c, leading to the activation of caspases 9 and 3. Mediates Ca(2+)-dependent up-regulation of the anti-inflammatory cytokine IL-10. Mediates entry into macrophages in a TLR2-dependent mechanism and activates the TLR2-dependent pro-adhesive pathway. The protein is PE-PGRS family protein PE_PGRS33 of Mycobacterium tuberculosis (strain ATCC 25618 / H37Rv).